We begin with the raw amino-acid sequence, 367 residues long: Probable glutamine synthetase (367 aa).

The GS beta-grasp domain occupies 30–110 (IQATYVWIDG…VMCDTLDHQM (81 aa)). Residues 117–367 (HRQACAEIMH…TAMIAQSILF (251 aa)) enclose the GS catalytic domain.

This sequence belongs to the glutamine synthetase family. As to quaternary structure, homooctamer.

It localises to the cytoplasm. The catalysed reaction is L-glutamate + NH4(+) + ATP = L-glutamine + ADP + phosphate + H(+). The polypeptide is Probable glutamine synthetase (gln-2) (Caenorhabditis elegans).